The sequence spans 261 residues: Lysoplasmalogenase (261 aa).

A run of 8 helical transmembrane segments spans residues 29-49 (GWVV…VIAL), 65-85 (PAFK…HPIG), 90-107 (WLVP…LLAI), 111-133 (TWAF…GALL), 146-166 (VAAV…FWPH), 172-192 (LTIP…TALL), 197-217 (TIWT…IGIG), and 227-247 (AVPI…GFFF).

The protein belongs to the TMEM86 family.

It localises to the cell membrane. It catalyses the reaction a 1-O-(1Z-alkenyl)-sn-glycero-3-phosphocholine + H2O = a 2,3-saturated aldehyde + sn-glycerol 3-phosphocholine. The catalysed reaction is a 1-O-(1Z-alkenyl)-sn-glycero-3-phosphoethanolamine + H2O = a 2,3-saturated aldehyde + sn-glycero-3-phosphoethanolamine. Functionally, specifically hydrolyzes the vinyl ether bond of lysoplasmenylcholine (pLPC) and lysoplasmenylethanolamine (pLPE) to release a fatty aldehyde and glycerophospho-choline or glycerophospho-ethanolamine. The polypeptide is Lysoplasmalogenase (Mycobacterium bovis (strain ATCC BAA-935 / AF2122/97)).